Consider the following 143-residue polypeptide: Large ribosomal subunit protein uL13 (143 aa).

Belongs to the universal ribosomal protein uL13 family. Part of the 50S ribosomal subunit.

In terms of biological role, this protein is one of the early assembly proteins of the 50S ribosomal subunit, although it is not seen to bind rRNA by itself. It is important during the early stages of 50S assembly. The polypeptide is Large ribosomal subunit protein uL13 (Symbiobacterium thermophilum (strain DSM 24528 / JCM 14929 / IAM 14863 / T)).